The chain runs to 180 residues: Probable RNA 2'-phosphotransferase (180 aa).

Belongs to the KptA/TPT1 family.

Functionally, removes the 2'-phosphate from RNA via an intermediate in which the phosphate is ADP-ribosylated by NAD followed by a presumed transesterification to release the RNA and generate ADP-ribose 1''-2''-cyclic phosphate (APPR&gt;P). May function as an ADP-ribosylase. The chain is Probable RNA 2'-phosphotransferase from Pectobacterium atrosepticum (strain SCRI 1043 / ATCC BAA-672) (Erwinia carotovora subsp. atroseptica).